Here is a 301-residue protein sequence, read N- to C-terminus: tRNA-cytidine(32) 2-sulfurtransferase (301 aa).

Residues 47 to 52 (SGGKDS) carry the PP-loop motif motif. Residues C122, C125, and C213 each coordinate [4Fe-4S] cluster.

The protein belongs to the TtcA family. Homodimer. Mg(2+) is required as a cofactor. [4Fe-4S] cluster serves as cofactor.

It is found in the cytoplasm. The enzyme catalyses cytidine(32) in tRNA + S-sulfanyl-L-cysteinyl-[cysteine desulfurase] + AH2 + ATP = 2-thiocytidine(32) in tRNA + L-cysteinyl-[cysteine desulfurase] + A + AMP + diphosphate + H(+). It participates in tRNA modification. Its function is as follows. Catalyzes the ATP-dependent 2-thiolation of cytidine in position 32 of tRNA, to form 2-thiocytidine (s(2)C32). The sulfur atoms are provided by the cysteine/cysteine desulfurase (IscS) system. The sequence is that of tRNA-cytidine(32) 2-sulfurtransferase from Photobacterium profundum (strain SS9).